The chain runs to 515 residues: MPKERRSRRRPEPIIRWVSLTLTLLALCQPIQTWRCSLSLGNQQWMTAYNQEAKFSISIDQILEAHNQSPFCAKSPRYTLDSVNGYPKIYWPPPQGRRRFGARAMVTYDCEPRCPYVGADRFDCPHWDNASQADQGSFYVNHQILFLHLKQCHGIFTLTWEIWGYDPLITFSLHKIPDPPQPDFPQLNSDWVPSVRSWALLLNQTARAFPDCAICWEPSPPWAPEILVYNKTISSSGPGLALPDAQIFWVNTSSFNTTQGWHHPSQRLLFNVSQGNALLLPPISLVNLSTASSAPPTRVRRSPVAALTLGLALSVGLTGIKVAVSALSHQRLTSLIHVLEQDQQRLITAINQTHYNLLNVASVVAQNRRGLDWLYIRLGFQSLCPTINEPCCFLRIQNDSIIRLGDLQPLSQRVSTDWQWPWNWDLGLTAWVRETIHSVLSLFLLALLLLFLAPCLIKCLTSRLSKLLRQAPHFPEISFPPKPDSDYQALLPSAPEIYSHLSPTKPDYINLRPCP.

A signal peptide spans 1–33; sequence MPKERRSRRRPEPIIRWVSLTLTLLALCQPIQT. The Extracellular portion of the chain corresponds to 34–435; it reads WRCSLSLGNQ…LGLTAWVRET (402 aa). Residues Asn-129 and Asn-203 are each glycosylated (N-linked (GlcNAc...) asparagine; by host). The CXXC motif lies at 212–215; it reads CAIC. 3 cysteine pairs are disulfide-bonded: Cys-212/Cys-215, Cys-212/Cys-392, and Cys-384/Cys-391. Asn-230, Asn-251, Asn-256, Asn-271, and Asn-287 each carry an N-linked (GlcNAc...) asparagine; by host glycan. Residues 304–324 form a fusion peptide region; that stretch reads VAALTLGLALSVGLTGIKVAV. Coiled-coil stretches lie at residues 330–376 and 388–420; these read QRLT…WLYI and NEPCCFLRIQNDSIIRLGDLQPLSQRVSTDWQW. Asn-351 is a glycosylation site (N-linked (GlcNAc...) asparagine; by host). The tract at residues 365–381 is immunosuppression; sequence AQNRRGLDWLYIRLGFQ. Positions 384–392 match the CX6CC motif; it reads CPTINEPCC. An N-linked (GlcNAc...) asparagine; by host glycan is attached at Asn-398. The chain crosses the membrane as a helical span at residues 436 to 456; sequence IHSVLSLFLLALLLLFLAPCL. Cys-455 is lipidated: S-palmitoyl cysteine; by host. Residues 457-515 lie on the Cytoplasmic side of the membrane; the sequence is IKCLTSRLSKLLRQAPHFPEISFPPKPDSDYQALLPSAPEIYSHLSPTKPDYINLRPCP.

As to quaternary structure, the mature envelope protein (Env) consists of a trimer of SU-TM heterodimers attached by a labile interchain disulfide bond. Specific enzymatic cleavages in vivo yield mature proteins. Envelope glycoproteins are synthesized as an inactive precursor that is N-glycosylated and processed likely by host cell furin or by a furin-like protease in the Golgi to yield the mature SU and TM proteins. The cleavage site between SU and TM requires the minimal sequence [KR]-X-[KR]-R. Post-translationally, the CXXC motif is highly conserved across a broad range of retroviral envelope proteins. It is thought to participate in the formation of a labile disulfide bond possibly with the CX6CC motif present in the transmembrane protein. Isomerization of the intersubunit disulfide bond to an SU intrachain disulfide bond is thought to occur upon receptor recognition in order to allow membrane fusion. In terms of processing, the transmembrane protein is palmitoylated.

Its subcellular location is the virion membrane. The protein localises to the host cell membrane. The surface protein (SU) attaches the virus to the host cell by binding to its receptor. This interaction triggers the refolding of the transmembrane protein (TM) and is thought to activate its fusogenic potential by unmasking its fusion peptide. Fusion occurs at the host cell plasma membrane. Its function is as follows. The transmembrane protein (TM) acts as a class I viral fusion protein. Under the current model, the protein has at least 3 conformational states: pre-fusion native state, pre-hairpin intermediate state, and post-fusion hairpin state. During viral and target cell membrane fusion, the coiled coil regions (heptad repeats) assume a trimer-of-hairpins structure, positioning the fusion peptide in close proximity to the C-terminal region of the ectodomain. The formation of this structure appears to drive apposition and subsequent fusion of viral and target cell membranes. Membranes fusion leads to delivery of the nucleocapsid into the cytoplasm. This chain is Envelope glycoprotein (env), found in Bovine leukemia virus (isolate Australian) (BLV).